Consider the following 360-residue polypeptide: DNA replication and repair protein RecF (360 aa).

30 to 37 serves as a coordination point for ATP; that stretch reads GVNGAGKT.

This sequence belongs to the RecF family.

It is found in the cytoplasm. In terms of biological role, the RecF protein is involved in DNA metabolism; it is required for DNA replication and normal SOS inducibility. RecF binds preferentially to single-stranded, linear DNA. It also seems to bind ATP. The chain is DNA replication and repair protein RecF from Thioalkalivibrio sulfidiphilus (strain HL-EbGR7).